The primary structure comprises 334 residues: 3-dehydroquinate synthase (334 aa).

This sequence belongs to the archaeal-type DHQ synthase family.

The enzyme catalyses 2-amino-2,3,7-trideoxy-D-lyxo-hept-6-ulosonate + NAD(+) + H2O = 3-dehydroquinate + NH4(+) + NADH + H(+). Catalyzes the oxidative deamination and cyclization of 2-amino-3,7-dideoxy-D-threo-hept-6-ulosonic acid (ADH) to yield 3-dehydroquinate (DHQ), which is fed into the canonical shikimic pathway of aromatic amino acid biosynthesis. The sequence is that of 3-dehydroquinate synthase from Korarchaeum cryptofilum (strain OPF8).